Reading from the N-terminus, the 91-residue chain is DNA-directed RNA polymerase subunit omega (91 aa).

Belongs to the RNA polymerase subunit omega family. The RNAP catalytic core consists of 2 alpha, 1 beta, 1 beta' and 1 omega subunit. When a sigma factor is associated with the core the holoenzyme is formed, which can initiate transcription.

The catalysed reaction is RNA(n) + a ribonucleoside 5'-triphosphate = RNA(n+1) + diphosphate. In terms of biological role, promotes RNA polymerase assembly. Latches the N- and C-terminal regions of the beta' subunit thereby facilitating its interaction with the beta and alpha subunits. This chain is DNA-directed RNA polymerase subunit omega, found in Pseudoalteromonas translucida (strain TAC 125).